A 272-amino-acid chain; its full sequence is Flagellin (272 aa).

It belongs to the bacterial flagellin family.

It is found in the secreted. Its subcellular location is the bacterial flagellum. In terms of biological role, flagellin is the subunit protein which polymerizes to form the filaments of bacterial flagella. The sequence is that of Flagellin (hag) from Halalkalibacterium halodurans (strain ATCC BAA-125 / DSM 18197 / FERM 7344 / JCM 9153 / C-125) (Bacillus halodurans).